The following is a 329-amino-acid chain: Ribosomal RNA small subunit methyltransferase H (329 aa).

S-adenosyl-L-methionine contacts are provided by residues 34–36 (GGH), D59, F86, D112, and Q119.

This sequence belongs to the methyltransferase superfamily. RsmH family.

Its subcellular location is the cytoplasm. It catalyses the reaction cytidine(1402) in 16S rRNA + S-adenosyl-L-methionine = N(4)-methylcytidine(1402) in 16S rRNA + S-adenosyl-L-homocysteine + H(+). In terms of biological role, specifically methylates the N4 position of cytidine in position 1402 (C1402) of 16S rRNA. The sequence is that of Ribosomal RNA small subunit methyltransferase H from Chlorobium phaeobacteroides (strain DSM 266 / SMG 266 / 2430).